The sequence spans 765 residues: Phosphoribosylformylglycinamidine synthase subunit PurL (765 aa).

The span at 1–13 (MTVSPTSAPTQAI) shows a compositional bias: polar residues. Positions 1-32 (MTVSPTSAPTQAIDTVERAATTPDEPQPFGEL) are disordered. Residue histidine 65 is part of the active site. ATP-binding residues include tyrosine 68 and lysine 112. Glutamate 114 contacts Mg(2+). Residues 115 to 118 (SHNH) and arginine 137 contribute to the substrate site. Histidine 116 (proton acceptor) is an active-site residue. Mg(2+) is bound at residue aspartate 138. Residue glutamine 263 coordinates substrate. Aspartate 291 is a binding site for Mg(2+). Residue 335–337 (ESQ) coordinates substrate. Residues asparagine 523 and glycine 560 each contribute to the ATP site. A Mg(2+)-binding site is contributed by asparagine 561. Serine 563 provides a ligand contact to substrate.

It belongs to the FGAMS family. Monomer. Part of the FGAM synthase complex composed of 1 PurL, 1 PurQ and 2 PurS subunits.

The protein resides in the cytoplasm. The enzyme catalyses N(2)-formyl-N(1)-(5-phospho-beta-D-ribosyl)glycinamide + L-glutamine + ATP + H2O = 2-formamido-N(1)-(5-O-phospho-beta-D-ribosyl)acetamidine + L-glutamate + ADP + phosphate + H(+). It participates in purine metabolism; IMP biosynthesis via de novo pathway; 5-amino-1-(5-phospho-D-ribosyl)imidazole from N(2)-formyl-N(1)-(5-phospho-D-ribosyl)glycinamide: step 1/2. Its function is as follows. Part of the phosphoribosylformylglycinamidine synthase complex involved in the purines biosynthetic pathway. Catalyzes the ATP-dependent conversion of formylglycinamide ribonucleotide (FGAR) and glutamine to yield formylglycinamidine ribonucleotide (FGAM) and glutamate. The FGAM synthase complex is composed of three subunits. PurQ produces an ammonia molecule by converting glutamine to glutamate. PurL transfers the ammonia molecule to FGAR to form FGAM in an ATP-dependent manner. PurS interacts with PurQ and PurL and is thought to assist in the transfer of the ammonia molecule from PurQ to PurL. This Mycobacterium avium (strain 104) protein is Phosphoribosylformylglycinamidine synthase subunit PurL.